Reading from the N-terminus, the 231-residue chain is Putative transglycosylase H16_A0665 (231 aa).

Residues 8–28 form a helical membrane-spanning segment; the sequence is FIKLLVLAVIGGALLAAIAIL.

This sequence belongs to the glycosyltransferase 51 family.

The protein resides in the secreted. The protein localises to the membrane. The protein operates within cell wall biogenesis; peptidoglycan biosynthesis. Its function is as follows. Cell wall formation. The protein is Putative transglycosylase H16_A0665 of Cupriavidus necator (strain ATCC 17699 / DSM 428 / KCTC 22496 / NCIMB 10442 / H16 / Stanier 337) (Ralstonia eutropha).